The sequence spans 273 residues: NADPH-dependent 7-cyano-7-deazaguanine reductase (273 aa).

81–83 (VES) lines the substrate pocket. 83–84 (SK) is a binding site for NADPH. The active-site Thioimide intermediate is the cysteine 179. The active-site Proton donor is the aspartate 186. Residue 218–219 (AE) coordinates substrate. 247-248 (RG) lines the NADPH pocket.

It belongs to the GTP cyclohydrolase I family. QueF type 2 subfamily. Homodimer.

Its subcellular location is the cytoplasm. It catalyses the reaction 7-aminomethyl-7-carbaguanine + 2 NADP(+) = 7-cyano-7-deazaguanine + 2 NADPH + 3 H(+). It participates in tRNA modification; tRNA-queuosine biosynthesis. Its function is as follows. Catalyzes the NADPH-dependent reduction of 7-cyano-7-deazaguanine (preQ0) to 7-aminomethyl-7-deazaguanine (preQ1). In Rickettsia prowazekii (strain Madrid E), this protein is NADPH-dependent 7-cyano-7-deazaguanine reductase.